The primary structure comprises 368 residues: Alanine racemase (368 aa).

Lys34 functions as the Proton acceptor; specific for D-alanine in the catalytic mechanism. An N6-(pyridoxal phosphate)lysine modification is found at Lys34. Residue Arg132 participates in substrate binding. Residue Tyr261 is the Proton acceptor; specific for L-alanine of the active site. Met309 is a substrate binding site.

Belongs to the alanine racemase family. The cofactor is pyridoxal 5'-phosphate.

It catalyses the reaction L-alanine = D-alanine. The protein operates within amino-acid biosynthesis; D-alanine biosynthesis; D-alanine from L-alanine: step 1/1. Functionally, catalyzes the interconversion of L-alanine and D-alanine. May also act on other amino acids. The chain is Alanine racemase (alr) from Carboxydothermus hydrogenoformans (strain ATCC BAA-161 / DSM 6008 / Z-2901).